A 198-amino-acid polypeptide reads, in one-letter code: Phosphoheptose isomerase (198 aa).

The 159-residue stretch at 40-198 (IIGALRGGHK…IEAALMQDAR (159 aa)) folds into the SIS domain. 55–57 (NGG) is a substrate binding site. Positions 64 and 68 each coordinate Zn(2+). Substrate contacts are provided by residues Glu-68, 97–98 (ND), 123–125 (STS), Ser-128, and Gln-175. The Zn(2+) site is built by Gln-175 and His-183.

This sequence belongs to the SIS family. GmhA subfamily. As to quaternary structure, homotetramer. Zn(2+) serves as cofactor.

It localises to the cytoplasm. The enzyme catalyses 2 D-sedoheptulose 7-phosphate = D-glycero-alpha-D-manno-heptose 7-phosphate + D-glycero-beta-D-manno-heptose 7-phosphate. It participates in carbohydrate biosynthesis; D-glycero-D-manno-heptose 7-phosphate biosynthesis; D-glycero-alpha-D-manno-heptose 7-phosphate and D-glycero-beta-D-manno-heptose 7-phosphate from sedoheptulose 7-phosphate: step 1/1. Functionally, catalyzes the isomerization of sedoheptulose 7-phosphate in D-glycero-D-manno-heptose 7-phosphate. The sequence is that of Phosphoheptose isomerase from Bradyrhizobium sp. (strain ORS 278).